An 819-amino-acid chain; its full sequence is Cadherin-24 (819 aa).

The first 19 residues, 1–19 (MWGLVRLLLAWLGGWGCMG), serve as a signal peptide directing secretion. The propeptide occupies 21–44 (LAAPARAWAGSREHPGPALLRTRR). The Extracellular segment spans residues 45-641 (SWVWNQFFVI…LSAAGLSTGA (597 aa)). Cadherin domains lie at 46–150 (WVWN…PPIF), 151–259 (PLGP…PPKF), 260–374 (PQSL…PPAF), 375–517 (TQAA…APQL), and 517–630 (LAEP…WPEA). 3 N-linked (GlcNAc...) asparagine glycosylation sites follow: Asn446, Asn548, and Asn563. A helical transmembrane segment spans residues 642-662 (LLAIITCVGALLALVVLFVAL). The Cytoplasmic segment spans residues 663–819 (RRQKQEALMV…LYGAKEPPAP (157 aa)). The segment at 768-800 (YEGRGSSCGSLSSLGSGSEAGGAPGPAEPLDDW) is disordered. Over residues 771–784 (RGSSCGSLSSLGSG) the composition is skewed to low complexity.

In terms of assembly, associates with alpha-, beta- and delta-catenins.

Its subcellular location is the cell membrane. Cadherins are calcium-dependent cell adhesion proteins. They preferentially interact with themselves in a homophilic manner in connecting cells; cadherins may thus contribute to the sorting of heterogeneous cell types. Cadherin-24 mediate strong cell-cell adhesion. The protein is Cadherin-24 (CDH24) of Homo sapiens (Human).